The following is a 270-amino-acid chain: uncharacterized protein (270 aa).

A run of 10 helical transmembrane segments spans residues 12-32 (AAIV…RNVG), 35-55 (TLSV…PFCL), 64-84 (TLLG…AAIQ), 88-108 (VAMA…LSVL), 117-137 (TLLA…PYAE), 138-158 (LTFG…VFVL), 171-191 (ITFY…LMFG), 194-214 (GSWL…FVLF), 226-246 (APIL…FYFG), and 248-268 (TLTL…LIAW). EamA domains lie at 19–133 (VLMG…LMLT) and 150–269 (LSYA…IAWR).

This sequence belongs to the EamA transporter family.

The protein localises to the cell membrane. This is an uncharacterized protein from Archaeoglobus fulgidus (strain ATCC 49558 / DSM 4304 / JCM 9628 / NBRC 100126 / VC-16).